The sequence spans 490 residues: Cytochrome P450 2C14 (490 aa).

Cysteine 435 lines the heme pocket.

This sequence belongs to the cytochrome P450 family. Heme is required as a cofactor.

It is found in the endoplasmic reticulum membrane. The protein localises to the microsome membrane. It carries out the reaction an organic molecule + reduced [NADPH--hemoprotein reductase] + O2 = an alcohol + oxidized [NADPH--hemoprotein reductase] + H2O + H(+). Cytochromes P450 are a group of heme-thiolate monooxygenases. In liver microsomes, this enzyme is involved in an NADPH-dependent electron transport pathway. It oxidizes a variety of structurally unrelated compounds, including steroids, fatty acids, and xenobiotics. The polypeptide is Cytochrome P450 2C14 (CYP2C14) (Oryctolagus cuniculus (Rabbit)).